We begin with the raw amino-acid sequence, 199 residues long: uncharacterized protein (199 aa).

4 helical membrane passes run 41 to 61, 72 to 92, 109 to 129, and 145 to 165; these read LFIP…AFIC, SLIC…CSPW, TVWV…SIFV, and VTYS…LLNL.

This sequence to M.pneumoniae MPN_037.

It localises to the cell membrane. This is an uncharacterized protein from Mycoplasma pneumoniae (strain ATCC 29342 / M129 / Subtype 1) (Mycoplasmoides pneumoniae).